Here is a 272-residue protein sequence, read N- to C-terminus: Probable prolyl 4-hydroxylase 11 (272 aa).

Residues 1–55 (MSKSTSVSTILYLRQRLQGLKIYETSDLIQHINTFDELVGEQVSVDVKIEEKTKD) are Cytoplasmic-facing. Residues 56–80 (MILLCSLSPLLTTLTCSMVKVAASL) traverse the membrane as a helical; Signal-anchor for type II membrane protein segment. The Lumenal segment spans residues 81–272 (RFPNERWLEV…KRHCLSLNLF (192 aa)). One can recognise a Fe2OG dioxygenase domain in the interval 179-272 (NGETLQVINY…KRHCLSLNLF (94 aa)). Residues H197, D199, and H261 each contribute to the Fe cation site.

It belongs to the P4HA family. Fe(2+) serves as cofactor. Requires L-ascorbate as cofactor.

The protein localises to the endoplasmic reticulum membrane. It carries out the reaction L-prolyl-[collagen] + 2-oxoglutarate + O2 = trans-4-hydroxy-L-prolyl-[collagen] + succinate + CO2. Its function is as follows. Catalyzes the post-translational formation of 4-hydroxyproline in -Xaa-Pro-Gly- sequences in proline-rich peptide sequences of plant glycoproteins and other proteins. Hydroxyprolines are important constituent of many plant cell wall glycoproteins such as extensins, hydroxyproline-rich glycoproteins, lectins and arabinogalactan proteins. This chain is Probable prolyl 4-hydroxylase 11, found in Arabidopsis thaliana (Mouse-ear cress).